The primary structure comprises 492 residues: Chitooligosaccharide oxidase (492 aa).

The N-terminal stretch at 1–19 (MHFNTLTCVLVGLVAHTSA) is a signal peptide. Positions 57-229 (LPFEPAAIAV…VELEFQTFAA (173 aa)) constitute an FAD-binding PCMH-type domain. The 6-(S-cysteinyl)-8alpha-(pros-histidyl)-FAD (His-Cys) cross-link spans 94–154 (HSYTSLGFGG…GKRALAHGTC (61 aa)).

Belongs to the oxygen-dependent FAD-linked oxidoreductase family. Requires FAD as cofactor. Post-translationally, the FAD cofactor is bound via a bicovalent 6-S-cysteinyl, 8alpha-N1-histidyl FAD linkage.

The protein resides in the secreted. The catalysed reaction is N,N'-diacetylchitobiose + O2 = N,N'-diacetylchitobiono-1,5-lactone + H2O2. It catalyses the reaction N,N',N''-triacetylchitotriose + O2 = N,N',N''-triacetylchitotriono-1,5-lactone + H2O2. The enzyme catalyses N,N',N'',N'''-tetraacetylchitotetraose + O2 = N,N',N'',N'''-tetraacetylchitotetraono-1,5-lactone + H2O2. Catalyzes the selective oxidation of C1 hydroxyl moieties on chitooligosaccharides with concomitant reduction of molecular oxygen to hydrogen peroxide. This results in the formation of the corresponding lactones, which typically undergo spontaneous hydrolysis. Chitooligosaccharides are homo- or heterooligomers of N-acetylglucosamine (GlcNAc) and D-glucosamine which are linked through beta-1,4-glycosidic bonds. For optimal substrate binding at least 2 GlcNAc units are needed, and chitooligosaccharide oxidase is most efficient on chitobiose, chitotriose and chitotetraose. The polypeptide is Chitooligosaccharide oxidase (Gibberella zeae (strain ATCC MYA-4620 / CBS 123657 / FGSC 9075 / NRRL 31084 / PH-1) (Wheat head blight fungus)).